A 326-amino-acid polypeptide reads, in one-letter code: Ribose-phosphate pyrophosphokinase (326 aa).

ATP-binding positions include 45 to 47 (NGE) and 104 to 105 (RQ). Residues histidine 138 and aspartate 178 each contribute to the Mg(2+) site. The active site involves lysine 202. D-ribose 5-phosphate is bound by residues arginine 204, aspartate 230, and 234–238 (DTGGT).

The protein belongs to the ribose-phosphate pyrophosphokinase family. Class I subfamily. In terms of assembly, homohexamer. It depends on Mg(2+) as a cofactor.

The protein localises to the cytoplasm. It carries out the reaction D-ribose 5-phosphate + ATP = 5-phospho-alpha-D-ribose 1-diphosphate + AMP + H(+). Its pathway is metabolic intermediate biosynthesis; 5-phospho-alpha-D-ribose 1-diphosphate biosynthesis; 5-phospho-alpha-D-ribose 1-diphosphate from D-ribose 5-phosphate (route I): step 1/1. In terms of biological role, involved in the biosynthesis of the central metabolite phospho-alpha-D-ribosyl-1-pyrophosphate (PRPP) via the transfer of pyrophosphoryl group from ATP to 1-hydroxyl of ribose-5-phosphate (Rib-5-P). The polypeptide is Ribose-phosphate pyrophosphokinase (Mycobacterium bovis (strain ATCC BAA-935 / AF2122/97)).